The following is a 417-amino-acid chain: uncharacterized protein (417 aa).

Disordered regions lie at residues Phe-44–Arg-83 and Val-325–Glu-346. Positions Ser-54–Ser-64 are enriched in low complexity. A compositionally biased stretch (polar residues) spans Ala-65–Asn-76. Residues Gln-326–Arg-339 show a composition bias toward basic residues. Residues Phe-362–Val-382 form a helical membrane-spanning segment.

The protein localises to the membrane. This is an uncharacterized protein from Caenorhabditis elegans.